A 198-amino-acid chain; its full sequence is Fucoxanthin-chlorophyll a-c binding protein B, chloroplastic (198 aa).

A chloroplast-targeting transit peptide spans 1 to 31; sequence MKFTVFASLFASAAAFAPAQQAARTSVATNM. The next 3 helical transmembrane spans lie at 73-94, 114-134, and 174-196; these read ISML…GGDI, IPQA…TSVM, and GRAA…NILP.

Belongs to the fucoxanthin chlorophyll protein family. The LHC complex of chromophytic algae is composed of fucoxanthin, chlorophyll A and C bound non-covalently by fucoxanthin chlorophyll proteins (FCPs). The ratio of the pigments in LHC; fucoxanthin: chlorophyll C: chlorophyll A; (0.6-1): (0.1-0.3): (1).

The protein localises to the plastid. Its subcellular location is the chloroplast thylakoid membrane. Its function is as follows. The light-harvesting complex (LHC) functions as a light receptor, it captures and delivers excitation energy to photosystems with which it is closely associated. Energy is transferred from the carotenoid and chlorophyll C (or B) to chlorophyll A and the photosynthetic reaction centers where it is used to synthesize ATP and reducing power. In Phaeodactylum tricornutum (Diatom), this protein is Fucoxanthin-chlorophyll a-c binding protein B, chloroplastic (FCPB).